Here is a 107-residue protein sequence, read N- to C-terminus: Large ribosomal subunit protein uL23 (107 aa).

It belongs to the universal ribosomal protein uL23 family. In terms of assembly, part of the 50S ribosomal subunit. Contacts protein L29, and trigger factor when it is bound to the ribosome.

Functionally, one of the early assembly proteins it binds 23S rRNA. One of the proteins that surrounds the polypeptide exit tunnel on the outside of the ribosome. Forms the main docking site for trigger factor binding to the ribosome. This is Large ribosomal subunit protein uL23 from Gluconobacter oxydans (strain 621H) (Gluconobacter suboxydans).